The chain runs to 539 residues: Glucans biosynthesis protein D (539 aa).

The segment at residues M1–A31 is a signal peptide (tat-type signal).

Belongs to the OpgD/OpgG family. In terms of processing, predicted to be exported by the Tat system. The position of the signal peptide cleavage has not been experimentally proven.

The protein localises to the periplasm. Its pathway is glycan metabolism; osmoregulated periplasmic glucan (OPG) biosynthesis. Probably involved in the control of the structural glucose backbone of osmoregulated periplasmic glucans (OPGs). This Pseudomonas fluorescens (strain ATCC BAA-477 / NRRL B-23932 / Pf-5) protein is Glucans biosynthesis protein D.